Here is a 293-residue protein sequence, read N- to C-terminus: MDSADIRSAKAALEKAIQGKNIETIINIMTRLKNEVVATEELLKETRLGLVVGKLRSHPNEKVGEQAREIVKKWKADVSKGRPLKTTTTTSSTPSKHADVGSQAQKQVQKQSSSGQRTFKSDNVNVNVTDDKIRNNCIGLMYNALVIDSDESSSLIIAKAKEIDAQVLARAAGKTGSEYRNRMRSLYMNLKDKNNPKLRASVLRNEITPQRLSTMTSAELASEDRRKEDAKLEQENLFHAQGAKPQKAVTDLFTCGKCKQKKVSYYQMQTRSADEPMTTFCECTVCGNRWKFS.

In terms of domain architecture, TFIIS N-terminal spans 4-81 (ADIRSAKAAL…KKWKADVSKG (78 aa)). The disordered stretch occupies residues 81 to 123 (GRPLKTTTTTSSTPSKHADVGSQAQKQVQKQSSSGQRTFKSDN). Residues 100-116 (VGSQAQKQVQKQSSSGQ) are compositionally biased toward low complexity. Positions 133–248 (IRNNCIGLMY…HAQGAKPQKA (116 aa)) constitute a TFIIS central domain. A TFIIS-type zinc finger spans residues 251 to 291 (DLFTCGKCKQKKVSYYQMQTRSADEPMTTFCECTVCGNRWK). Cysteine 255, cysteine 258, cysteine 283, and cysteine 286 together coordinate Zn(2+).

Belongs to the TFS-II family.

Its subcellular location is the nucleus. Its function is as follows. Necessary for efficient RNA polymerase II transcription elongation past template-encoded arresting sites. The arresting sites in DNA have the property of trapping a certain fraction of elongating RNA polymerases that pass through, resulting in locked ternary complexes. Cleavage of the nascent transcript by S-II allows the resumption of elongation from the new 3'-terminus. The sequence is that of Transcription elongation factor S-II (tfs1) from Schizosaccharomyces pombe (strain 972 / ATCC 24843) (Fission yeast).